Consider the following 190-residue polypeptide: Small ribosomal subunit protein uS5 (190 aa).

One can recognise an S5 DRBM domain in the interval 22-85 (FVDKLVHINR…ESAKRNLTRV (64 aa)).

The protein belongs to the universal ribosomal protein uS5 family. In terms of assembly, part of the 30S ribosomal subunit. Contacts proteins S4 and S8.

In terms of biological role, with S4 and S12 plays an important role in translational accuracy. Functionally, located at the back of the 30S subunit body where it stabilizes the conformation of the head with respect to the body. The polypeptide is Small ribosomal subunit protein uS5 (Rhodopseudomonas palustris (strain BisA53)).